We begin with the raw amino-acid sequence, 145 residues long: Cell wall teichoic acid glycosylation protein GtcA (145 aa).

Transmembrane regions (helical) follow at residues 21 to 41 (IFMY…TFWL), 45 to 65 (ILNW…VLFA), 91 to 111 (FFGF…LLIS), and 122 to 142 (IWTN…IIFK).

It belongs to the GtrA family.

Its subcellular location is the cell membrane. Involved in the decoration of cell wall teichoic acid with galactose and glucose. This Listeria monocytogenes protein is Cell wall teichoic acid glycosylation protein GtcA (gtcA).